The chain runs to 748 residues: Antigen peptide transporter 1 (748 aa).

The Cytoplasmic portion of the chain corresponds to 1-15 (MASSRCPAPRGCRCL). A helical transmembrane segment spans residues 16–36 (PGASLAWLGTVLLLLADWVLL). At 37–53 (RTALPRIFSLLVPTALP) the chain is on the lumenal side. Residues 54 to 76 (LLRVWAVGLSRWAVLWLGACGVL) traverse the membrane as a helical segment. Over 77–92 (RATVGSKSENAGAQGW) the chain is Cytoplasmic. Residues 93 to 113 (LAALKPLAAALGLALPGLALF) form a helical membrane-spanning segment. Topologically, residues 114–133 (RELISWGAPGSADSTRLLHW) are lumenal. A helical transmembrane segment spans residues 134–154 (GSHPTAFVVSYAAALPAAALW). Over 155–186 (HKLGSLWVPGGQGGSGNPVRRLLGCLGSETRR) the chain is Cytoplasmic. A helical transmembrane segment spans residues 187–207 (LSLFLVLVVLSSLGEMAIPFF). Residues 187 to 470 (LSLFLVLVVL…LLSIYPRVQK (284 aa)) enclose the ABC transmembrane type-1 domain. The Lumenal portion of the chain corresponds to 208–227 (TGRLTDWILQDGSADTFTRN). Residues 228 to 248 (LTLMSILTIASAVLEFVGDGI) form a helical membrane-spanning segment. Residues 249 to 298 (YNNTMGHVHSHLQGEVFGAVLRQETEFFQQNQTGNIMSRVTEDTSTLSDS) are Cytoplasmic-facing. A helical membrane pass occupies residues 299–319 (LSENLSLFLWYLVRGLCLLGI). The Lumenal segment spans residues 320–328 (MLWGSVSLT). A helical transmembrane segment spans residues 329-349 (MVTLITLPLLFLLPKKVGKWY). The Cytoplasmic segment spans residues 350 to 418 (QLLEVQVRES…AVNSWTTSIS (69 aa)). Residues 375–420 (PTVRSFANEEGEAQKFREKLQEIKTLNQKEAVAYAVNSWTTSISGM) form a part of the peptide-binding site region. Residues 419–439 (GMLLKVGILYIGGQLVTSGAV) form a helical membrane-spanning segment. Topologically, residues 440-443 (SSGN) are lumenal. Residues 444-464 (LVTFVLYQMQFTQAVEVLLSI) traverse the membrane as a helical segment. Positions 453–487 (QFTQAVEVLLSIYPRVQKAVGSSEKIFEYLDRTPR) are part of the peptide-binding site. Over 465–748 (YPRVQKAVGS…MVQAPADAPE (284 aa)) the chain is Cytoplasmic. In terms of domain architecture, ABC transporter spans 503 to 742 (VQFQDVSFAY…KGCYWAMVQA (240 aa)). Residues 538-546 (GPNGSGKST), 641-647 (SQLSGGQ), and Gln701 contribute to the ATP site. Residue Ser545 participates in Mg(2+) binding.

The protein belongs to the ABC transporter superfamily. ABCB family. MHC peptide exporter (TC 3.A.1.209) subfamily. In terms of assembly, heterodimer of TAP1 and TAP2 (TAP1-TAP2). A component of the peptide loading complex (PLC), interacts via TAPBP with MHCI heterodimer; this interaction mediates peptide-MHCI assembly. Recruits TAPBP in a 1:1 stoichiometry. Interacts with classical MHCI such as HLA-A*02-B2M; this interaction is obligatory for the loading of peptide epitopes. Interacts with non-classical MHCI molecules including HLA-E-B2M and HLA-F-B2M as well as PLC component CALR before the peptide loading. Interacts with PSMB5 and PSMB8. (Microbial infection) Interacts with Epstein-Barr virus BNLF2a. As to quaternary structure, (Microbial infection) Interacts with herpes simplex virus US12/ICP47. In terms of assembly, (Microbial infection) Interacts with adenovirus E3-19K glycoprotein, which binds TAP1-TAP2 and acts as a TAPBP inhibitor, preventing TAP1-TAP2 association with MHCI. Mg(2+) is required as a cofactor. Highly expressed in professional APCs monocytes and dendritic cells as well as in lymphocyte subsets T cells, B cells and NK cells.

It is found in the endoplasmic reticulum membrane. The enzyme catalyses a peptide antigen(in) + ATP + H2O = a peptide antigen(out) + ADP + phosphate + H(+). With respect to regulation, inhibited at high ER lumenal peptide concentrations. Its activity is regulated as follows. (Microbial infection) Inhibited by herpes simplex virus US12/ICP47 protein, which blocks the peptide-binding site of TAP1-TAP2. (Microbial infection) Inhibited by human cytomegalovirus US6 glycoprotein, which binds to the lumenal side of TAP1-TAP2 complex and inhibits peptide translocation by specifically blocking ATP-binding and preventing TAP1-TAP2 conformational rearrangement induced by peptide binding. Functionally, ABC transporter associated with antigen processing. In complex with TAP2 mediates unidirectional translocation of peptide antigens from cytosol to endoplasmic reticulum (ER) for loading onto MHC class I (MHCI) molecules. Uses the chemical energy of ATP to export peptides against the concentration gradient. During the transport cycle alternates between 'inward-facing' state with peptide binding site facing the cytosol to 'outward-facing' state with peptide binding site facing the ER lumen. Peptide antigen binding to ATP-loaded TAP1-TAP2 induces a switch to hydrolysis-competent 'outward-facing' conformation ready for peptide loading onto nascent MHCI molecules. Subsequently ATP hydrolysis resets the transporter to the 'inward facing' state for a new cycle. Typically transports intracellular peptide antigens of 8 to 13 amino acids that arise from cytosolic proteolysis via IFNG-induced immunoproteasome. Binds peptides with free N- and C-termini, the first three and the C-terminal residues being critical. Preferentially selects peptides having a highly hydrophobic residue at position 3 and hydrophobic or charged residues at the C-terminal anchor. Proline at position 2 has the most destabilizing effect. As a component of the peptide loading complex (PLC), acts as a molecular scaffold essential for peptide-MHCI assembly and antigen presentation. This is Antigen peptide transporter 1 from Homo sapiens (Human).